A 1137-amino-acid chain; its full sequence is Isoleucine--tRNA ligase (1137 aa).

Residues 50 to 60 carry the 'HIGH' region motif; that stretch reads PSANGMPGIHH. The short motif at 688 to 692 is the 'KMSKS' region element; the sequence is KMSKR. Lys691 lines the ATP pocket.

It belongs to the class-I aminoacyl-tRNA synthetase family. IleS type 2 subfamily. Monomer. Requires Zn(2+) as cofactor.

The protein resides in the cytoplasm. It carries out the reaction tRNA(Ile) + L-isoleucine + ATP = L-isoleucyl-tRNA(Ile) + AMP + diphosphate. In terms of biological role, catalyzes the attachment of isoleucine to tRNA(Ile). As IleRS can inadvertently accommodate and process structurally similar amino acids such as valine, to avoid such errors it has two additional distinct tRNA(Ile)-dependent editing activities. One activity is designated as 'pretransfer' editing and involves the hydrolysis of activated Val-AMP. The other activity is designated 'posttransfer' editing and involves deacylation of mischarged Val-tRNA(Ile). The protein is Isoleucine--tRNA ligase of Porphyromonas gingivalis (strain ATCC BAA-308 / W83).